The chain runs to 140 residues: Endoribonuclease YbeY (140 aa).

Residues H105, H109, and D115 each coordinate Zn(2+).

It belongs to the endoribonuclease YbeY family. The cofactor is Zn(2+).

It localises to the cytoplasm. Functionally, single strand-specific metallo-endoribonuclease involved in late-stage 70S ribosome quality control and in maturation of the 3' terminus of the 16S rRNA. The polypeptide is Endoribonuclease YbeY (Flavobacterium psychrophilum (strain ATCC 49511 / DSM 21280 / CIP 103535 / JIP02/86)).